The primary structure comprises 255 residues: 3-deoxy-manno-octulosonate cytidylyltransferase (255 aa).

The protein belongs to the KdsB family.

The protein localises to the cytoplasm. It carries out the reaction 3-deoxy-alpha-D-manno-oct-2-ulosonate + CTP = CMP-3-deoxy-beta-D-manno-octulosonate + diphosphate. It participates in nucleotide-sugar biosynthesis; CMP-3-deoxy-D-manno-octulosonate biosynthesis; CMP-3-deoxy-D-manno-octulosonate from 3-deoxy-D-manno-octulosonate and CTP: step 1/1. Its pathway is bacterial outer membrane biogenesis; lipopolysaccharide biosynthesis. Functionally, activates KDO (a required 8-carbon sugar) for incorporation into bacterial lipopolysaccharide in Gram-negative bacteria. The protein is 3-deoxy-manno-octulosonate cytidylyltransferase of Saccharophagus degradans (strain 2-40 / ATCC 43961 / DSM 17024).